Reading from the N-terminus, the 838-residue chain is Adenylate cyclase (838 aa).

The catalytic stretch occupies residues M1 to V541. The segment at E547–S838 is regulatory.

It belongs to the adenylyl cyclase class-1 family.

Its subcellular location is the cytoplasm. The enzyme catalyses ATP = 3',5'-cyclic AMP + diphosphate. This is Adenylate cyclase (cya) from Pasteurella multocida (strain Pm70).